The primary structure comprises 67 residues: Alpha-toxin Bu1 (67 aa).

The LCN-type CS-alpha/beta domain maps to 3-65 (RDAYIADDKN…VPIRIPGRCR (63 aa)). Intrachain disulfides connect C13–C64, C17–C37, C23–C47, and C27–C49. Arginine amide is present on R65.

This sequence belongs to the long (4 C-C) scorpion toxin superfamily. Sodium channel inhibitor family. Alpha subfamily. As to expression, expressed by the venom gland.

Its subcellular location is the secreted. In terms of biological role, alpha toxins bind voltage-independently at site-3 of sodium channels (Nav) and inhibit the inactivation of the activated channels, thereby blocking neuronal transmission. Since the experiments have been done on F11 cells (immortalized cell line derived from rat DRG neurons mainly expressing Nav1.3/SCN3A, but also Nav1.7/SCN9A and Nav1.2/SCN2A), it is supposed to act on these channels. The slow of inactivation process is partially reversible. Is lethal to mice. In Buthacus macrocentrus (Turkish scorpion), this protein is Alpha-toxin Bu1.